A 186-amino-acid polypeptide reads, in one-letter code: ATP-dependent protease subunit HslV (186 aa).

T14 is an active-site residue. Positions 168, 171, and 174 each coordinate Na(+).

It belongs to the peptidase T1B family. HslV subfamily. As to quaternary structure, a double ring-shaped homohexamer of HslV is capped on each side by a ring-shaped HslU homohexamer. The assembly of the HslU/HslV complex is dependent on binding of ATP.

The protein resides in the cytoplasm. The enzyme catalyses ATP-dependent cleavage of peptide bonds with broad specificity.. Its activity is regulated as follows. Allosterically activated by HslU binding. Its function is as follows. Protease subunit of a proteasome-like degradation complex believed to be a general protein degrading machinery. This Bradyrhizobium diazoefficiens (strain JCM 10833 / BCRC 13528 / IAM 13628 / NBRC 14792 / USDA 110) protein is ATP-dependent protease subunit HslV.